A 211-amino-acid polypeptide reads, in one-letter code: CASP-like protein 1B1 (211 aa).

The disordered stretch occupies residues methionine 1 to serine 29. At methionine 1–threonine 55 the chain is on the cytoplasmic side. Positions threonine 9–threonine 26 are enriched in low complexity. The helical transmembrane segment at alanine 56–valine 76 threads the bilayer. At glycine 77–alanine 94 the chain is on the extracellular side. The chain crosses the membrane as a helical span at residues phenylalanine 95–phenylalanine 115. At arginine 116 to arginine 123 the chain is on the cytoplasmic side. A helical transmembrane segment spans residues methionine 124 to alanine 144. Residues alanine 145–arginine 176 are Extracellular-facing. The helical transmembrane segment at glycine 177 to leucine 197 threads the bilayer. Residues serine 198 to glutamate 211 are Cytoplasmic-facing.

Belongs to the Casparian strip membrane proteins (CASP) family. Homodimer and heterodimers.

It localises to the cell membrane. The chain is CASP-like protein 1B1 from Sorghum bicolor (Sorghum).